The chain runs to 261 residues: Triosephosphate isomerase (261 aa).

Residue asparagine 10 to lysine 12 coordinates substrate. Histidine 100 functions as the Electrophile in the catalytic mechanism. Catalysis depends on glutamate 172, which acts as the Proton acceptor. Residues glycine 178, serine 218, and glycine 239–glycine 240 contribute to the substrate site.

The protein belongs to the triosephosphate isomerase family. In terms of assembly, homodimer.

It localises to the cytoplasm. The enzyme catalyses D-glyceraldehyde 3-phosphate = dihydroxyacetone phosphate. Its pathway is carbohydrate biosynthesis; gluconeogenesis. It functions in the pathway carbohydrate degradation; glycolysis; D-glyceraldehyde 3-phosphate from glycerone phosphate: step 1/1. Involved in the gluconeogenesis. Catalyzes stereospecifically the conversion of dihydroxyacetone phosphate (DHAP) to D-glyceraldehyde-3-phosphate (G3P). This is Triosephosphate isomerase from Saccharopolyspora erythraea (strain ATCC 11635 / DSM 40517 / JCM 4748 / NBRC 13426 / NCIMB 8594 / NRRL 2338).